We begin with the raw amino-acid sequence, 354 residues long: MSGNTLGRLFRLTTYGESHGAGLGGVIDGCPAGIALDEAVIQRELDLRRPGGNSASTTRQEPDRVRLLSGVFEGVTTGTPIAFHVENVDQRSRDYGEIARLYRPGHADFTYDAKFGVRDYRGGGRASGRETLSRVAGGAIAQALLARHGIAVRAFTVELGGVPADLVDVAGAQQRPFFSPDPDVVEAWEDMVRTVKGEGDTLGGIVQVEATGVPAGLGEPVFDKLDAVLAYALMSVGAVKGVEVGAGFEAARMHGSDNNDPIVPSGFFTNHAGGILGGISNGETIVLRAAVKPIPSIAQEQITIDRDGKPSALFIAGRHDISAIPRIVPVLKAMTALVLADMLLMQRRMATPQP.

Arg48 serves as a coordination point for NADP(+). FMN contacts are provided by residues 125-127 (RAS), Gly277, 292-296 (KPIPS), and Arg318.

This sequence belongs to the chorismate synthase family. As to quaternary structure, homotetramer. FMNH2 serves as cofactor.

It catalyses the reaction 5-O-(1-carboxyvinyl)-3-phosphoshikimate = chorismate + phosphate. It functions in the pathway metabolic intermediate biosynthesis; chorismate biosynthesis; chorismate from D-erythrose 4-phosphate and phosphoenolpyruvate: step 7/7. Catalyzes the anti-1,4-elimination of the C-3 phosphate and the C-6 proR hydrogen from 5-enolpyruvylshikimate-3-phosphate (EPSP) to yield chorismate, which is the branch point compound that serves as the starting substrate for the three terminal pathways of aromatic amino acid biosynthesis. This reaction introduces a second double bond into the aromatic ring system. In Nitratidesulfovibrio vulgaris (strain ATCC 29579 / DSM 644 / CCUG 34227 / NCIMB 8303 / VKM B-1760 / Hildenborough) (Desulfovibrio vulgaris), this protein is Chorismate synthase.